The chain runs to 93 residues: YcgL domain-containing protein VV1058 (93 aa).

The 84-residue stretch at 1–84 folds into the YcgL domain; it reads MLCSIYKSSK…PPENLLQQHK (84 aa). Residues 74-93 are disordered; it reads PPPENLLQQHKERKAQQKND.

The polypeptide is YcgL domain-containing protein VV1058 (Vibrio vulnificus (strain YJ016)).